The sequence spans 407 residues: Substance-P receptor (407 aa).

Residues 1-31 lie on the Extracellular side of the membrane; that stretch reads MDNVLPVDSDLSPNISTNTSEPNQFVQPAWQ. Residues Asn-14 and Asn-18 are each glycosylated (N-linked (GlcNAc...) asparagine). A helical membrane pass occupies residues 32-54; that stretch reads IVLWAAAYTVIVVTSVVGNVVVM. Topologically, residues 55–64 are cytoplasmic; sequence WIILAHKRMR. The chain crosses the membrane as a helical span at residues 65-86; it reads TVTNYFLVNLAFAEASMAAFNT. Topologically, residues 87-106 are extracellular; it reads VVNFTYAVHNEWYYGLFYCK. Cys-105 and Cys-180 are disulfide-bonded. A helical transmembrane segment spans residues 107 to 128; the sequence is FHNFFPIAAVFASIYSMTAVAF. Residues 129-148 lie on the Cytoplasmic side of the membrane; sequence DRYMAIIHPLQPRLSATATK. A helical transmembrane segment spans residues 149-169; it reads VVICVIWVLALLLAFPQGYYS. Over 170–194 the chain is Extracellular; that stretch reads TTETMPSRVVCMIEWPEHPNKIYEK. The chain crosses the membrane as a helical span at residues 195 to 219; that stretch reads VYHICVTVLIYFLPLLVIGYAYTVV. Residue His-197 participates in CP-96345 binding. Topologically, residues 220 to 248 are cytoplasmic; it reads GITLWASEIPGDSSDRYHEQVSAKRKVVK. Residues 249-270 traverse the membrane as a helical segment; that stretch reads MMIVVVCTFAICWLPFHIFFLL. Topologically, residues 271–283 are extracellular; sequence PYINPDLYLKKFI. The chain crosses the membrane as a helical span at residues 284–308; the sequence is QQVYLAIMWLAMSSTMYNPIIYCCL. At 309 to 407 the chain is on the cytoplasmic side; the sequence is NDRFRLGFKH…SFSFSSNVLS (99 aa). Cys-322 carries the S-palmitoyl cysteine lipid modification. Residues 364–407 are disordered; it reads AHEEEPEDGPKATPSSLDLTSNCSSRSDSKTMTESFSFSSNVLS. Residues 376–407 show a composition bias toward polar residues; that stretch reads TPSSLDLTSNCSSRSDSKTMTESFSFSSNVLS.

This sequence belongs to the G-protein coupled receptor 1 family. In terms of assembly, interacts with ARRB1.

It localises to the cell membrane. Its function is as follows. This is a receptor for the tachykinin neuropeptide substance P. It is probably associated with G proteins that activate a phosphatidylinositol-calcium second messenger system. The rank order of affinity of this receptor to tachykinins is: substance P &gt; substance K &gt; neuromedin-K. The protein is Substance-P receptor (TACR1) of Homo sapiens (Human).